The following is a 205-amino-acid chain: Basonuclin zinc finger protein homolog (205 aa).

C2H2-type zinc fingers lie at residues 107-130 (VACD…SAVH) and 135-164 (HTCT…PKLH). The interval 145–168 (QFSSRRSRNRHSSNNNPKLHMPES) is disordered.

Expressed in the VA and VB motor neurons and at lower levels in the SABV neuron pair.

The protein localises to the nucleus. Probable transcription factor. Involved in motor neuron fate determination and maintenance, acting as a transcriptional repressor to counteract gene activation by transcription factor unc-3 in a subset of motor neurons. Required throughout development to repress transcription by unc-3, probably acting by binding to specific promoter elements. Represses expression of DA and DB motor neuron-specific effector genes, such as unc-129 and unc-53, in VA and VB motor neurons. The polypeptide is Basonuclin zinc finger protein homolog (Caenorhabditis elegans).